The chain runs to 430 residues: Enolase (430 aa).

Q163 is a (2R)-2-phosphoglycerate binding site. The active-site Proton donor is the E205. D242, E287, and D314 together coordinate Mg(2+). The (2R)-2-phosphoglycerate site is built by K339, R368, S369, and K390. The Proton acceptor role is filled by K339.

Belongs to the enolase family. Mg(2+) is required as a cofactor.

It localises to the cytoplasm. The protein resides in the secreted. Its subcellular location is the cell surface. It carries out the reaction (2R)-2-phosphoglycerate = phosphoenolpyruvate + H2O. Its pathway is carbohydrate degradation; glycolysis; pyruvate from D-glyceraldehyde 3-phosphate: step 4/5. In terms of biological role, catalyzes the reversible conversion of 2-phosphoglycerate (2-PG) into phosphoenolpyruvate (PEP). It is essential for the degradation of carbohydrates via glycolysis. This is Enolase from Exiguobacterium sibiricum (strain DSM 17290 / CCUG 55495 / CIP 109462 / JCM 13490 / 255-15).